Reading from the N-terminus, the 383-residue chain is MQTWQLPEHIADVLPTNARQLESAREQLLALFRVHGYELVQPPLMEYAHSLLTHIDAGLSLKTILVTDRLSGRQLGIRADITPQVARIDAHLLSANQGINRLCYAGPVLHAQPDGLLNMREPLQAGAEMYGFADIRGDIELIDLMLKSMKIADMGKVLLSLGHIGIFRALSDAAHLDAGQSATLLALMQDKDTGAVEAQVKAWKLDGMWAKAFSLLPRLYGGREVLSDARGRLPDLSAVGGALGELQAVCDAFPDCEIHIDLSELRVDNYHTGLLYAAYAADFHDAVARGGRYDGLGGYFGRARPATGFSFDLRSFIGRLPAIERQPAVLVDAEDAEAAHEAVEALREQGQCVVIDYGIGHNVSEELAGRLKKTDGVWQVVKR.

This sequence belongs to the class-II aminoacyl-tRNA synthetase family. HisZ subfamily. As to quaternary structure, heteromultimer composed of HisG and HisZ subunits.

The protein localises to the cytoplasm. Its pathway is amino-acid biosynthesis; L-histidine biosynthesis; L-histidine from 5-phospho-alpha-D-ribose 1-diphosphate: step 1/9. Required for the first step of histidine biosynthesis. May allow the feedback regulation of ATP phosphoribosyltransferase activity by histidine. The polypeptide is ATP phosphoribosyltransferase regulatory subunit (hisZ) (Neisseria meningitidis serogroup B (strain ATCC BAA-335 / MC58)).